Consider the following 273-residue polypeptide: Probable ribosomal RNA small subunit methyltransferase A (273 aa).

S-adenosyl-L-methionine contacts are provided by Asn-23, Leu-25, Gly-50, Glu-71, Asp-95, and Asn-110.

Belongs to the class I-like SAM-binding methyltransferase superfamily. rRNA adenine N(6)-methyltransferase family. RsmA subfamily.

It is found in the cytoplasm. Functionally, specifically dimethylates two adjacent adenosines in the loop of a conserved hairpin near the 3'-end of 16S rRNA in the 30S particle. May play a critical role in biogenesis of 30S subunits. In Thermococcus sibiricus (strain DSM 12597 / MM 739), this protein is Probable ribosomal RNA small subunit methyltransferase A.